Reading from the N-terminus, the 470-residue chain is MNPNQKIITIGSICMAIGIISLILQIGNIISIWVSHSIQTGSQNHTGICNQRIITYENSTWVNQTYVNISNTNVVAGKDTTSMTLAGNSSLCPIRGWAIYSKDNSIRIGSKGDVFVIREPFISCSHLECRTFFLTQGALLNDKHSNGTVKDRSPYRALMSCPIGEAPSPYNSRFESVAWSASACHDGMGWLTIGISGPDDGAVAVLKYNGIITETIKSWRKQILRTQESECVCVNGSCFTIMTDGPSDGPASYRIFKIEKGKITKSIELDAPNSHYEECSCYPDTGTVMCVCRDNWHGSNRPWVSFNQNLDYQIGYICSGVFGDNPRPKDGKGSCDPVNVDGADGVKGFSYRYGNGVWIGRTKSNSSRKGFEMIWDPNGWTDTDSNFLVKQDVVAMTDWSGYSGSFVQHPELTGLDCMRPCFWVELIRGRPREKTTIWTSGSSISFCGVNSDTVNWSWPDGAELPFTIDK.

At 1–6 (MNPNQK) the chain is on the intravirion side. A helical membrane pass occupies residues 7–27 (IITIGSICMAIGIISLILQIG). The interval 11–33 (GSICMAIGIISLILQIGNIISIW) is involved in apical transport and lipid raft association. Residues 28–470 (NIISIWVSHS…GAELPFTIDK (443 aa)) lie on the Virion surface side of the membrane. Residues 36-90 (HSIQTGSQNHTGICNQRIITYENSTWVNQTYVNISNTNVVAGKDTTSMTLAGNSS) form a hypervariable stalk region region. Asparagine 44, asparagine 58, asparagine 63, asparagine 68, and asparagine 88 each carry an N-linked (GlcNAc...) asparagine; by host glycan. The interval 91–470 (LCPIRGWAIY…GAELPFTIDK (380 aa)) is head of neuraminidase. 8 disulfides stabilise this stretch: cysteine 92/cysteine 417, cysteine 124/cysteine 129, cysteine 184/cysteine 231, cysteine 233/cysteine 238, cysteine 279/cysteine 292, cysteine 281/cysteine 290, cysteine 318/cysteine 335, and cysteine 421/cysteine 447. Arginine 118 is a binding site for substrate. The N-linked (GlcNAc...) asparagine; by host glycan is linked to asparagine 146. Residue aspartate 151 is the Proton donor/acceptor of the active site. Residue arginine 152 participates in substrate binding. A glycan (N-linked (GlcNAc...) asparagine; by host) is linked at asparagine 235. 277 to 278 (EE) is a binding site for substrate. Substrate is bound at residue arginine 293. Ca(2+) is bound by residues aspartate 294, glycine 298, and aspartate 324. An N-linked (GlcNAc...) asparagine; by host glycan is attached at asparagine 365. Arginine 368 serves as a coordination point for substrate. The active-site Nucleophile is the tyrosine 402. The N-linked (GlcNAc...) asparagine; by host glycan is linked to asparagine 455.

It belongs to the glycosyl hydrolase 34 family. Homotetramer. The cofactor is Ca(2+). N-glycosylated.

The protein localises to the virion membrane. It is found in the host apical cell membrane. The catalysed reaction is Hydrolysis of alpha-(2-&gt;3)-, alpha-(2-&gt;6)-, alpha-(2-&gt;8)- glycosidic linkages of terminal sialic acid residues in oligosaccharides, glycoproteins, glycolipids, colominic acid and synthetic substrates.. Inhibited by the neuraminidase inhibitors zanamivir (Relenza) and oseltamivir (Tamiflu). These drugs interfere with the release of progeny virus from infected cells and are effective against all influenza strains. Resistance to neuraminidase inhibitors is quite rare. Its function is as follows. Catalyzes the removal of terminal sialic acid residues from viral and cellular glycoconjugates. Cleaves off the terminal sialic acids on the glycosylated HA during virus budding to facilitate virus release. Additionally helps virus spread through the circulation by further removing sialic acids from the cell surface. These cleavages prevent self-aggregation and ensure the efficient spread of the progeny virus from cell to cell. Otherwise, infection would be limited to one round of replication. Described as a receptor-destroying enzyme because it cleaves a terminal sialic acid from the cellular receptors. May facilitate viral invasion of the upper airways by cleaving the sialic acid moieties on the mucin of the airway epithelial cells. Likely to plays a role in the budding process through its association with lipid rafts during intracellular transport. May additionally display a raft-association independent effect on budding. Plays a role in the determination of host range restriction on replication and virulence. Sialidase activity in late endosome/lysosome traffic seems to enhance virus replication. In Influenza A virus (strain A/Brazil/11/1978 H1N1), this protein is Neuraminidase.